Consider the following 471-residue polypeptide: Mannose-1-phosphate guanylyltransferase (471 aa).

The protein belongs to the mannose-6-phosphate isomerase type 2 family.

The enzyme catalyses alpha-D-mannose 1-phosphate + GTP + H(+) = GDP-alpha-D-mannose + diphosphate. The protein operates within nucleotide-sugar biosynthesis; GDP-alpha-D-mannose biosynthesis; GDP-alpha-D-mannose from alpha-D-mannose 1-phosphate (GTP route): step 1/1. Involved in the biosynthesis of the K2 capsular polysaccharide biosynthesis. This Klebsiella pneumoniae protein is Mannose-1-phosphate guanylyltransferase (manC).